The sequence spans 410 residues: Beta-arrestin-2 (410 aa).

Residue Tyr48 is modified to Phosphotyrosine. Hydroxyproline; by PHD2 is present on residues Pro176 and Pro181. The interaction with TRAF6 stretch occupies residues 241–410 (ADICLFSTAQ…KDDDCDDQFC (170 aa)). Phosphoserine is present on Ser361. The interval 364-410 (RETDVPVDTNLIEFDTNYATDDDIVFEDFARLRLKGMKDDDCDDQFC) is interaction with AP2B1. Thr383 is subject to Phosphothreonine. The [DE]-X(1,2)-F-X-X-[FL]-X-X-X-R motif motif lies at 386–396 (DIVFEDFARLR).

This sequence belongs to the arrestin family. In terms of assembly, homooligomer; the self-association is mediated by InsP6-binding. Heterooligomer with ARRB1; the association is mediated by InsP6-binding. Interacts with ADRB2 and CHRM2. Interacts with PDE4A. Interacts with PDE4D. Interacts with MAPK10, MAPK1 and MAPK3. Interacts with DRD2. Interacts with FSHR. Interacts with CLTC. Interacts with HTR2C. Interacts with CCR5. Interacts with CXCR4. Interacts with SRC. Interacts with DUSP16; the interaction is interrupted by stimulation of AGTR1 and activation of MAPK10. Interacts with CHUK; the interaction is enhanced stimulation of ADRB2. Interacts with RELA. Interacts with MDM2; the interaction is enhanced by activation of GPCRs. Interacts with SLC9A5. Interacts with TRAF6. Interacts with IGF1R. Interacts with ENG. Interacts with ARRB2. Interacts with KIR2DL1, KIR2DL3 and KIR2DL4. Interacts with LDLR. Interacts with AP2B1. Interacts with C5AR1. Interacts with RAF1. Interacts with MAP2K1. Interacts with MAPK1. Interacts with MAPK10; the interaction enhances MAPK10 activation by MAP3K5. Interacts with MAP2K4; the interaction is enhanced by presence of MAP3K5 and MAPK10. Interacts with MAP3K5. Interacts with AKT1. Interacts with IKBKB and MAP3K14. Interacts with SMO (activated). Interacts with GSK3A and GSK3B. Interacts with CXCR4; the interaction is dependent on C-terminal phosphorylation of CXCR4 and allows activation of MAPK1 and MAPK3. Interacts with GPR143. Interacts with HCK and CXCR1 (phosphorylated). Associates with protein phosphatase 2A (PP2A). Interacts with ACKR3 and ACKR4. Interacts with ARRDC1; the interaction is direct. Interacts with GPR61, GPR62 and GPR135. Interacts (via NACHT and LRR domains) with NLRP3; this interaction is direct and inducible by omega-3 polyunsaturated fatty acids (PUFAs). Interacts with FFAR4 (via C-terminus); this interaction is stimulated by long-chain fatty acids (LCFAs). Interacts with GPR35. Interacts with GPR84. Interacts with TIGIT; this interaction inhibits the NF-kappa-B pathway. Interacts with TGFBR3. Post-translationally, phosphorylated at Thr-383 in the cytoplasm; probably dephosphorylated at the plasma membrane. The phosphorylation does not regulate internalization and recycling of ADRB2, interaction with clathrin or AP2B1. The ubiquitination status appears to regulate the formation and trafficking of beta-arrestin-GPCR complexes and signaling. Ubiquitination appears to occur GPCR-specific. Ubiquitinated by MDM2; the ubiquitination is required for rapid internalization of ADRB2. Deubiquitinated by USP33; the deubiquitination leads to a dissociation of the beta-arrestin-GPCR complex. Stimulation of a class A GPCR, such as ADRB2, induces transient ubiquitination and subsequently promotes association with USP33. Stimulation of a class B GPCR promotes a sustained ubiquitination. Deubiquitinated by USP20; allowing USP20 to deubiquitinate TRAF6 leading to inhibition of NF-kappa-B signaling. In terms of processing, hydroxylation by PHD2 modulates the rate of internalization by slowing down recruitment to the plasma membrane and inhibiting subsequent co-internalization with class A receptors. In terms of tissue distribution, predominantly localized in neuronal tissues and in the spleen.

The protein localises to the cytoplasm. It is found in the nucleus. Its subcellular location is the cell membrane. The protein resides in the membrane. It localises to the clathrin-coated pit. The protein localises to the cytoplasmic vesicle. Functionally, functions in regulating agonist-mediated G-protein coupled receptor (GPCR) signaling by mediating both receptor desensitization and resensitization processes. During homologous desensitization, beta-arrestins bind to the GPRK-phosphorylated receptor and sterically preclude its coupling to the cognate G-protein; the binding appears to require additional receptor determinants exposed only in the active receptor conformation. The beta-arrestins target many receptors for internalization by acting as endocytic adapters (CLASPs, clathrin-associated sorting proteins) and recruiting the GPRCs to the adapter protein 2 complex 2 (AP-2) in clathrin-coated pits (CCPs). However, the extent of beta-arrestin involvement appears to vary significantly depending on the receptor, agonist and cell type. Internalized arrestin-receptor complexes traffic to intracellular endosomes, where they remain uncoupled from G-proteins. Two different modes of arrestin-mediated internalization occur. Class A receptors, like ADRB2, OPRM1, ENDRA, D1AR and ADRA1B dissociate from beta-arrestin at or near the plasma membrane and undergo rapid recycling. Class B receptors, like AVPR2, AGTR1, NTSR1, TRHR and TACR1 internalize as a complex with arrestin and traffic with it to endosomal vesicles, presumably as desensitized receptors, for extended periods of time. Receptor resensitization then requires that receptor-bound arrestin is removed so that the receptor can be dephosphorylated and returned to the plasma membrane. Mediates endocytosis of CCR7 following ligation of CCL19 but not CCL21. Involved in internalization of P2RY1, P2RY4, P2RY6 and P2RY11 and ATP-stimulated internalization of P2RY2. Involved in phosphorylation-dependent internalization of OPRD1 and subsequent recycling or degradation. Involved in ubiquitination of IGF1R. Beta-arrestins function as multivalent adapter proteins that can switch the GPCR from a G-protein signaling mode that transmits short-lived signals from the plasma membrane via small molecule second messengers and ion channels to a beta-arrestin signaling mode that transmits a distinct set of signals that are initiated as the receptor internalizes and transits the intracellular compartment. Acts as a signaling scaffold for MAPK pathways such as MAPK1/3 (ERK1/2) and MAPK10 (JNK3). ERK1/2 and JNK3 activated by the beta-arrestin scaffold are largely excluded from the nucleus and confined to cytoplasmic locations such as endocytic vesicles, also called beta-arrestin signalosomes. Acts as a signaling scaffold for the AKT1 pathway. GPCRs for which the beta-arrestin-mediated signaling relies on both ARRB1 and ARRB2 (codependent regulation) include ADRB2, F2RL1 and PTH1R. For some GPCRs the beta-arrestin-mediated signaling relies on either ARRB1 or ARRB2 and is inhibited by the other respective beta-arrestin form (reciprocal regulation). Increases ERK1/2 signaling in AGTR1- and AVPR2-mediated activation (reciprocal regulation). Involved in CCR7-mediated ERK1/2 signaling involving ligand CCL19. Is involved in type-1A angiotensin II receptor/AGTR1-mediated ERK activity. Is involved in type-1A angiotensin II receptor/AGTR1-mediated MAPK10 activity. Is involved in dopamine-stimulated AKT1 activity in the striatum by disrupting the association of AKT1 with its negative regulator PP2A. Involved in AGTR1-mediated chemotaxis. Appears to function as signaling scaffold involved in regulation of MIP-1-beta-stimulated CCR5-dependent chemotaxis. Involved in attenuation of NF-kappa-B-dependent transcription in response to GPCR or cytokine stimulation by interacting with and stabilizing CHUK. Suppresses UV-induced NF-kappa-B-dependent activation by interacting with CHUK. The function is promoted by stimulation of ADRB2 and dephosphorylation of ARRB2. Involved in IL8-mediated granule release in neutrophils. Involved in p53/TP53-mediated apoptosis by regulating MDM2 and reducing the MDM2-mediated degradation of p53/TP53. May serve as nuclear messenger for GPCRs. Upon stimulation of OR1D2, may be involved in regulation of gene expression during the early processes of fertilization. Also involved in regulation of receptors other than GPCRs. Involved in endocytosis of TGFBR2 and TGFBR3 and down-regulates TGF-beta signaling such as NF-kappa-B activation. Involved in endocytosis of low-density lipoprotein receptor/LDLR. Involved in endocytosis of smoothened homolog/Smo, which also requires GRK2. Involved in endocytosis of SLC9A5. Involved in endocytosis of ENG and subsequent TGF-beta-mediated ERK activation and migration of epithelial cells. Involved in Toll-like receptor and IL-1 receptor signaling through the interaction with TRAF6 which prevents TRAF6 autoubiquitination and oligomerization required for activation of NF-kappa-B and JUN. Involved in insulin resistance by acting as insulin-induced signaling scaffold for SRC, AKT1 and INSR. Involved in regulation of inhibitory signaling of natural killer cells by recruiting PTPN6 and PTPN11 to KIR2DL1. Involved in the internalization of the atypical chemokine receptor ACKR3. Acts as an adapter protein coupling FFAR4 receptor to specific downstream signaling pathways, as well as mediating receptor endocytosis. During the activation step of NLRP3 inflammasome, directly associates with NLRP3 leading to inhibition of pro-inflammatory cytokine release and inhibition of inflammation. This is Beta-arrestin-2 (Arrb2) from Mus musculus (Mouse).